The following is a 26-amino-acid chain: Dermaseptin-B5 (26 aa).

V26 is subject to Valine amide.

This sequence belongs to the frog skin active peptide (FSAP) family. Dermaseptin subfamily. In terms of tissue distribution, expressed by the skin glands.

Its subcellular location is the secreted. Its function is as follows. Possesses a potent antimicrobial activity against Gram-positive and Gram-negative bacteria. Probably acts by disturbing membrane functions with its amphipathic structure. The polypeptide is Dermaseptin-B5 (Phyllomedusa bicolor (Two-colored leaf frog)).